The primary structure comprises 155 residues: SsrA-binding protein (155 aa).

The protein belongs to the SmpB family.

It is found in the cytoplasm. Required for rescue of stalled ribosomes mediated by trans-translation. Binds to transfer-messenger RNA (tmRNA), required for stable association of tmRNA with ribosomes. tmRNA and SmpB together mimic tRNA shape, replacing the anticodon stem-loop with SmpB. tmRNA is encoded by the ssrA gene; the 2 termini fold to resemble tRNA(Ala) and it encodes a 'tag peptide', a short internal open reading frame. During trans-translation Ala-aminoacylated tmRNA acts like a tRNA, entering the A-site of stalled ribosomes, displacing the stalled mRNA. The ribosome then switches to translate the ORF on the tmRNA; the nascent peptide is terminated with the 'tag peptide' encoded by the tmRNA and targeted for degradation. The ribosome is freed to recommence translation, which seems to be the essential function of trans-translation. The chain is SsrA-binding protein from Streptococcus pyogenes serotype M4 (strain MGAS10750).